Here is a 167-residue protein sequence, read N- to C-terminus: Large ribosomal subunit protein uL10 (167 aa).

This sequence belongs to the universal ribosomal protein uL10 family. Part of the ribosomal stalk of the 50S ribosomal subunit. The N-terminus interacts with L11 and the large rRNA to form the base of the stalk. The C-terminus forms an elongated spine to which L12 dimers bind in a sequential fashion forming a multimeric L10(L12)X complex.

Its function is as follows. Forms part of the ribosomal stalk, playing a central role in the interaction of the ribosome with GTP-bound translation factors. The sequence is that of Large ribosomal subunit protein uL10 from Flavobacterium johnsoniae (strain ATCC 17061 / DSM 2064 / JCM 8514 / BCRC 14874 / CCUG 350202 / NBRC 14942 / NCIMB 11054 / UW101) (Cytophaga johnsonae).